The primary structure comprises 467 residues: Dihydrolipoyl dehydrogenase 3 (467 aa).

Residues 34–43 (EGRETLGGTC), Lys52, and Ala116 contribute to the FAD site. A disulfide bridge connects residues Cys43 and Cys48. NAD(+)-binding positions include 182 to 186 (GAGVI), Glu205, Val239, and 272 to 275 (AIGR). Asp314 and Ala322 together coordinate FAD. His446 (proton acceptor) is an active-site residue.

It belongs to the class-I pyridine nucleotide-disulfide oxidoreductase family. Homodimer. It depends on FAD as a cofactor.

It is found in the cytoplasm. It catalyses the reaction N(6)-[(R)-dihydrolipoyl]-L-lysyl-[protein] + NAD(+) = N(6)-[(R)-lipoyl]-L-lysyl-[protein] + NADH + H(+). LPD-3 may substitute for lipoamide dehydrogenase of the 2-oxoglutarate dehydrogenase and pyruvate multienzyme complexes when the latter is inactive or missing. The polypeptide is Dihydrolipoyl dehydrogenase 3 (lpd3) (Pseudomonas aeruginosa (strain ATCC 15692 / DSM 22644 / CIP 104116 / JCM 14847 / LMG 12228 / 1C / PRS 101 / PAO1)).